We begin with the raw amino-acid sequence, 57 residues long: Potassium channel toxin alpha-KTx 8.5 (57 aa).

Residues 1 to 28 (MSRLYAIILIALVLNVIMTIMPDSKVEA) form the signal peptide. Cystine bridges form between Cys31-Cys47, Cys34-Cys52, and Cys38-Cys54.

The protein belongs to the short scorpion toxin superfamily. Potassium channel inhibitor family. Alpha-KTx 08 subfamily. As to expression, expressed by the venom gland.

It is found in the secreted. Its function is as follows. Selectively inhibits voltage-gated potassium channels Kv1.2/KCNA2 (IC(50)=183 nM). In Odontobuthus doriae (Yellow Iranian scorpion), this protein is Potassium channel toxin alpha-KTx 8.5.